The following is a 133-amino-acid chain: Small ribosomal subunit protein uS8 (133 aa).

The protein belongs to the universal ribosomal protein uS8 family. Part of the 30S ribosomal subunit.

One of the primary rRNA binding proteins, it binds directly to 16S rRNA central domain where it helps coordinate assembly of the platform of the 30S subunit. This is Small ribosomal subunit protein uS8 from Staphylothermus marinus (strain ATCC 43588 / DSM 3639 / JCM 9404 / F1).